A 443-amino-acid polypeptide reads, in one-letter code: ATP-dependent protease ATPase subunit HslU (443 aa).

ATP contacts are provided by residues Ile-18, 60–65 (GVGKTE), Asp-256, Glu-321, and Arg-393.

The protein belongs to the ClpX chaperone family. HslU subfamily. In terms of assembly, a double ring-shaped homohexamer of HslV is capped on each side by a ring-shaped HslU homohexamer. The assembly of the HslU/HslV complex is dependent on binding of ATP.

It localises to the cytoplasm. In terms of biological role, ATPase subunit of a proteasome-like degradation complex; this subunit has chaperone activity. The binding of ATP and its subsequent hydrolysis by HslU are essential for unfolding of protein substrates subsequently hydrolyzed by HslV. HslU recognizes the N-terminal part of its protein substrates and unfolds these before they are guided to HslV for hydrolysis. This Escherichia fergusonii (strain ATCC 35469 / DSM 13698 / CCUG 18766 / IAM 14443 / JCM 21226 / LMG 7866 / NBRC 102419 / NCTC 12128 / CDC 0568-73) protein is ATP-dependent protease ATPase subunit HslU.